A 400-amino-acid polypeptide reads, in one-letter code: Canavanine gamma-lyase (400 aa).

The residue at position 213 (Lys213) is an N6-(pyridoxal phosphate)lysine.

The protein belongs to the trans-sulfuration enzymes family. Requires pyridoxal 5'-phosphate as cofactor.

The enzyme catalyses L-canavanine + H2O = N-hydroxyguanidine + L-homoserine. Functionally, lyase involved in the degradation of canavanine, the delta-oxa-analog of arginine, allowing growth on canavanine as sole nitrogen and carbon source. Catalyzes the elimination of hydroxyguanidine from canavanine with a subsequent water addition to yield homoserine. Is highly specific for canavanine and cannot use methionine, cystathionine or arginine. This chain is Canavanine gamma-lyase, found in Pseudomonas canavaninivorans.